We begin with the raw amino-acid sequence, 464 residues long: ATP-dependent protease ATPase subunit HslU (464 aa).

ATP-binding positions include valine 18, 60–65 (GVGKTE), aspartate 277, glutamate 342, and arginine 414.

The protein belongs to the ClpX chaperone family. HslU subfamily. A double ring-shaped homohexamer of HslV is capped on each side by a ring-shaped HslU homohexamer. The assembly of the HslU/HslV complex is dependent on binding of ATP.

Its subcellular location is the cytoplasm. Functionally, ATPase subunit of a proteasome-like degradation complex; this subunit has chaperone activity. The binding of ATP and its subsequent hydrolysis by HslU are essential for unfolding of protein substrates subsequently hydrolyzed by HslV. HslU recognizes the N-terminal part of its protein substrates and unfolds these before they are guided to HslV for hydrolysis. This chain is ATP-dependent protease ATPase subunit HslU, found in Lactobacillus leichmannii.